The sequence spans 374 residues: Queuine tRNA-ribosyltransferase (374 aa).

Catalysis depends on D89, which acts as the Proton acceptor. Substrate-binding positions include 89–93 (DSGGF), D143, Q187, and G214. The segment at 245 to 251 (GVGKPED) is RNA binding. D264 (nucleophile) is an active-site residue. Positions 269 to 273 (TRNAR) are RNA binding; important for wobble base 34 recognition. Positions 302, 304, 307, and 333 each coordinate Zn(2+).

Belongs to the queuine tRNA-ribosyltransferase family. Homodimer. Within each dimer, one monomer is responsible for RNA recognition and catalysis, while the other monomer binds to the replacement base PreQ1. Requires Zn(2+) as cofactor.

It carries out the reaction 7-aminomethyl-7-carbaguanine + guanosine(34) in tRNA = 7-aminomethyl-7-carbaguanosine(34) in tRNA + guanine. The protein operates within tRNA modification; tRNA-queuosine biosynthesis. In terms of biological role, catalyzes the base-exchange of a guanine (G) residue with the queuine precursor 7-aminomethyl-7-deazaguanine (PreQ1) at position 34 (anticodon wobble position) in tRNAs with GU(N) anticodons (tRNA-Asp, -Asn, -His and -Tyr). Catalysis occurs through a double-displacement mechanism. The nucleophile active site attacks the C1' of nucleotide 34 to detach the guanine base from the RNA, forming a covalent enzyme-RNA intermediate. The proton acceptor active site deprotonates the incoming PreQ1, allowing a nucleophilic attack on the C1' of the ribose to form the product. After dissociation, two additional enzymatic reactions on the tRNA convert PreQ1 to queuine (Q), resulting in the hypermodified nucleoside queuosine (7-(((4,5-cis-dihydroxy-2-cyclopenten-1-yl)amino)methyl)-7-deazaguanosine). The chain is Queuine tRNA-ribosyltransferase from Psychromonas ingrahamii (strain DSM 17664 / CCUG 51855 / 37).